A 712-amino-acid polypeptide reads, in one-letter code: 3',5'-cyclic-AMP phosphodiesterase 4C (712 aa).

2 disordered regions span residues 1-31 and 45-64; these read MENLGVGEGAEACSRLSRSRGRHSMTRAPKH and RFYSDPDKSAGCRERDLSPR. The segment covering 17 to 31 has biased composition (basic residues); that stretch reads SRSRGRHSMTRAPKH. Positions 48–64 are enriched in basic and acidic residues; sequence SDPDKSAGCRERDLSPR. Phosphoserine is present on Ser-73. Positions 181–200 are disordered; the sequence is AKQGPVGNPSSSNQLPPAED. The region spanning 312–641 is the PDEase domain; that stretch reads VQTDQEEQLA…EWYQSKIPRS (330 aa). The active-site Proton donor is the His-388. His-388 serves as a coordination point for 3',5'-cyclic AMP. AMP is bound by residues His-388 and His-392. Zn(2+) contacts are provided by His-392, His-428, Asp-429, and Asp-546. Positions 429, 546, 597, and 600 each coordinate AMP. Residue Asp-429 coordinates Mg(2+). Position 429 (Asp-429) interacts with Mn(2+). 3',5'-cyclic AMP is bound by residues Gln-597 and Phe-600. 2 disordered regions span residues 636-655 and 664-712; these read SKIPRSPSDLTNPERDGPDR and EAEE…NQRT. Ser-641 carries the phosphoserine modification. Residues 664 to 678 are compositionally biased toward acidic residues; that stretch reads EAEEEDEEEEEEGEE.

The protein belongs to the cyclic nucleotide phosphodiesterase family. PDE4 subfamily. Part of a complex containing AKAP5, ADCY5, ADCY6 and PKD2. Requires Zn(2+) as cofactor. Mg(2+) is required as a cofactor. It depends on Mn(2+) as a cofactor. In terms of tissue distribution, expressed in various tissues but not in cells of the immune system.

The protein resides in the cell projection. It is found in the cilium. The enzyme catalyses 3',5'-cyclic AMP + H2O = AMP + H(+). The protein operates within purine metabolism; 3',5'-cyclic AMP degradation; AMP from 3',5'-cyclic AMP: step 1/1. Inhibited by rolipram. Hydrolyzes the second messenger cAMP, which is a key regulator of many important physiological processes. This Homo sapiens (Human) protein is 3',5'-cyclic-AMP phosphodiesterase 4C.